A 150-amino-acid chain; its full sequence is SsrA-binding protein (150 aa).

This sequence belongs to the SmpB family.

Its subcellular location is the cytoplasm. Functionally, required for rescue of stalled ribosomes mediated by trans-translation. Binds to transfer-messenger RNA (tmRNA), required for stable association of tmRNA with ribosomes. tmRNA and SmpB together mimic tRNA shape, replacing the anticodon stem-loop with SmpB. tmRNA is encoded by the ssrA gene; the 2 termini fold to resemble tRNA(Ala) and it encodes a 'tag peptide', a short internal open reading frame. During trans-translation Ala-aminoacylated tmRNA acts like a tRNA, entering the A-site of stalled ribosomes, displacing the stalled mRNA. The ribosome then switches to translate the ORF on the tmRNA; the nascent peptide is terminated with the 'tag peptide' encoded by the tmRNA and targeted for degradation. The ribosome is freed to recommence translation, which seems to be the essential function of trans-translation. The polypeptide is SsrA-binding protein (Borreliella burgdorferi (strain ATCC 35210 / DSM 4680 / CIP 102532 / B31) (Borrelia burgdorferi)).